Here is a 273-residue protein sequence, read N- to C-terminus: Large ribosomal subunit protein uL2 (273 aa).

Residues 224-264 (AMNPVDHPHGGGEGRNFGKHPVTPWGIQTKGKKTRKNKRTD) are disordered. Basic residues predominate over residues 253 to 264 (KGKKTRKNKRTD).

The protein belongs to the universal ribosomal protein uL2 family. Part of the 50S ribosomal subunit. Forms a bridge to the 30S subunit in the 70S ribosome.

Functionally, one of the primary rRNA binding proteins. Required for association of the 30S and 50S subunits to form the 70S ribosome, for tRNA binding and peptide bond formation. It has been suggested to have peptidyltransferase activity; this is somewhat controversial. Makes several contacts with the 16S rRNA in the 70S ribosome. The sequence is that of Large ribosomal subunit protein uL2 from Buchnera aphidicola subsp. Acyrthosiphon pisum (strain 5A).